The chain runs to 356 residues: S-adenosylmethionine:tRNA ribosyltransferase-isomerase (356 aa).

It belongs to the QueA family. Monomer.

It localises to the cytoplasm. It catalyses the reaction 7-aminomethyl-7-carbaguanosine(34) in tRNA + S-adenosyl-L-methionine = epoxyqueuosine(34) in tRNA + adenine + L-methionine + 2 H(+). It functions in the pathway tRNA modification; tRNA-queuosine biosynthesis. Its function is as follows. Transfers and isomerizes the ribose moiety from AdoMet to the 7-aminomethyl group of 7-deazaguanine (preQ1-tRNA) to give epoxyqueuosine (oQ-tRNA). The chain is S-adenosylmethionine:tRNA ribosyltransferase-isomerase from Shigella boydii serotype 18 (strain CDC 3083-94 / BS512).